A 463-amino-acid polypeptide reads, in one-letter code: ATP-dependent protease ATPase subunit HslU (463 aa).

ATP contacts are provided by residues I19 and 61–66 (GVGKTE). Positions 154-174 (FGGAQNSSQTSDTQEDGEIEK) are disordered. Positions 277, 341, and 413 each coordinate ATP.

This sequence belongs to the ClpX chaperone family. HslU subfamily. As to quaternary structure, a double ring-shaped homohexamer of HslV is capped on each side by a ring-shaped HslU homohexamer. The assembly of the HslU/HslV complex is dependent on binding of ATP.

The protein resides in the cytoplasm. Functionally, ATPase subunit of a proteasome-like degradation complex; this subunit has chaperone activity. The binding of ATP and its subsequent hydrolysis by HslU are essential for unfolding of protein substrates subsequently hydrolyzed by HslV. HslU recognizes the N-terminal part of its protein substrates and unfolds these before they are guided to HslV for hydrolysis. The protein is ATP-dependent protease ATPase subunit HslU of Bacillus cereus (strain G9842).